We begin with the raw amino-acid sequence, 295 residues long: Small ribosomal subunit protein mS23 (295 aa).

The interval I249–N295 is disordered. A compositionally biased stretch (low complexity) spans Q273 to Q289.

It belongs to the mitochondrion-specific ribosomal protein mS23 family. Component of the mitochondrial small ribosomal subunit (mt-SSU).

The protein resides in the mitochondrion. In terms of biological role, component of the mitochondrial ribosome (mitoribosome), a dedicated translation machinery responsible for the synthesis of mitochondrial genome-encoded proteins, including at least some of the essential transmembrane subunits of the mitochondrial respiratory chain. The mitoribosomes are attached to the mitochondrial inner membrane and translation products are cotranslationally integrated into the membrane. The polypeptide is Small ribosomal subunit protein mS23 (RSM25) (Candida albicans (strain SC5314 / ATCC MYA-2876) (Yeast)).